We begin with the raw amino-acid sequence, 453 residues long: T-box transcription factor T homolog (453 aa).

Positions Leu47 to Asp217 form a DNA-binding region, T-box. Residues Arg283 to Ala304 are disordered.

It localises to the nucleus. Its function is as follows. May be involved in the transcriptional regulation of genes required for gastrulation. The sequence is that of T-box transcription factor T homolog from Patiria pectinifera (Starfish).